The chain runs to 396 residues: Argininosuccinate synthase (396 aa).

6 to 14 (AYSGGLDTS) serves as a coordination point for ATP. Tyr83 is a binding site for L-citrulline. Gly113 contacts ATP. Residues Thr115, Asn119, and Asp120 each contribute to the L-aspartate site. Asn119 lines the L-citrulline pocket. L-citrulline is bound by residues Arg123, Ser171, Ser180, Glu256, and Tyr268.

This sequence belongs to the argininosuccinate synthase family. Type 1 subfamily. As to quaternary structure, homotetramer.

It is found in the cytoplasm. The catalysed reaction is L-citrulline + L-aspartate + ATP = 2-(N(omega)-L-arginino)succinate + AMP + diphosphate + H(+). It participates in amino-acid biosynthesis; L-arginine biosynthesis; L-arginine from L-ornithine and carbamoyl phosphate: step 2/3. The sequence is that of Argininosuccinate synthase from Hyperthermus butylicus (strain DSM 5456 / JCM 9403 / PLM1-5).